The following is a 138-amino-acid chain: Large ribosomal subunit protein eL32 (138 aa).

Belongs to the eukaryotic ribosomal protein eL32 family.

This Saccharolobus solfataricus (strain ATCC 35092 / DSM 1617 / JCM 11322 / P2) (Sulfolobus solfataricus) protein is Large ribosomal subunit protein eL32 (rpl32e).